Consider the following 228-residue polypeptide: LexA repressor (228 aa).

Residues Phe26–Thr46 constitute a DNA-binding region (H-T-H motif). Active-site for autocatalytic cleavage activity residues include Ser149 and Lys187.

The protein belongs to the peptidase S24 family. Homodimer.

The enzyme catalyses Hydrolysis of Ala-|-Gly bond in repressor LexA.. In terms of biological role, represses a number of genes involved in the response to DNA damage (SOS response), including recA and lexA. In the presence of single-stranded DNA, RecA interacts with LexA causing an autocatalytic cleavage which disrupts the DNA-binding part of LexA, leading to derepression of the SOS regulon and eventually DNA repair. This chain is LexA repressor, found in Jannaschia sp. (strain CCS1).